A 121-amino-acid chain; its full sequence is Autophagy-related protein 8f (121 aa).

G117 carries Phosphatidylethanolamine amidated glycine lipidation. The propeptide at 118–121 (FGSP) is removed in mature form.

This sequence belongs to the ATG8 family. As to quaternary structure, interacts with ATG4. Interacts with NBR1. Interacts with ATI1 and ATI2. Interacts with SH3P2. Post-translationally, the C-terminal 4 residues are removed by ATG4 to expose Gly-117 at the C-terminus. This Gly-117 forms then a thioester bond with the 'Cys-558' of ATG7 (E1-like activating enzyme) before being transferred to the 'Cys-258' of ATG3 (the specific E2 conjugating enzyme), in order to be finally amidated with phosphatidylethanolamine. This lipid modification anchors ATG8 to autophagosomes. As to expression, constitutively expressed.

The protein localises to the cytoplasmic vesicle. It is found in the autophagosome membrane. The protein resides in the vacuole membrane. It localises to the cytoplasm. Its subcellular location is the cytoskeleton. Functionally, ubiquitin-like modifier involved in autophagosomes formation. May mediate the delivery of the autophagosomes to the vacuole via the microtubule cytoskeleton. In Arabidopsis thaliana (Mouse-ear cress), this protein is Autophagy-related protein 8f (ATG8F).